We begin with the raw amino-acid sequence, 115 residues long: Succinate dehydrogenase hydrophobic membrane anchor subunit (115 aa).

The Cytoplasmic segment spans residues M1–D15. A helical transmembrane segment spans residues F16–F36. Over F37 to K58 the chain is Periplasmic. A helical transmembrane segment spans residues V59–L80. H71 lines the heme pocket. Over T81–R90 the chain is Cytoplasmic. Y83 provides a ligand contact to a ubiquinone. The helical transmembrane segment at L91 to V115 threads the bilayer.

As to quaternary structure, part of an enzyme complex containing four subunits: a flavoprotein, an iron-sulfur protein, plus two membrane-anchoring proteins, SdhC and SdhD. The complex can form homotrimers. The cofactor is heme.

It localises to the cell inner membrane. The protein operates within carbohydrate metabolism; tricarboxylic acid cycle. In terms of biological role, membrane-anchoring subunit of succinate dehydrogenase (SDH). The sequence is that of Succinate dehydrogenase hydrophobic membrane anchor subunit (sdhD) from Escherichia coli O6:H1 (strain CFT073 / ATCC 700928 / UPEC).